A 351-amino-acid chain; its full sequence is Dihydroorotate dehydrogenase (quinone) (351 aa).

FMN-binding positions include Ala67 to Lys71 and Thr91. Lys71 is a substrate binding site. Residue Asn116–Phe120 participates in substrate binding. The FMN site is built by Asn145 and Asn178. Asn178 provides a ligand contact to substrate. Residue Ser181 is the Nucleophile of the active site. Asn183 is a binding site for substrate. FMN is bound by residues Lys214 and Thr242. Substrate is bound at residue Asn243–Thr244. Residues Gly262, Gly291, and Tyr312 to Ser313 contribute to the FMN site.

The protein belongs to the dihydroorotate dehydrogenase family. Type 2 subfamily. Monomer. The cofactor is FMN.

It localises to the cell membrane. It carries out the reaction (S)-dihydroorotate + a quinone = orotate + a quinol. It functions in the pathway pyrimidine metabolism; UMP biosynthesis via de novo pathway; orotate from (S)-dihydroorotate (quinone route): step 1/1. In terms of biological role, catalyzes the conversion of dihydroorotate to orotate with quinone as electron acceptor. The sequence is that of Dihydroorotate dehydrogenase (quinone) (pyrD) from Helicobacter pylori (strain J99 / ATCC 700824) (Campylobacter pylori J99).